The following is a 35-amino-acid chain: Photosystem II reaction center protein T (35 aa).

A helical transmembrane segment spans residues 3–23 (ALVYTFLLVSTLGIIFFAIFF).

This sequence belongs to the PsbT family. As to quaternary structure, PSII is composed of 1 copy each of membrane proteins PsbA, PsbB, PsbC, PsbD, PsbE, PsbF, PsbH, PsbI, PsbJ, PsbK, PsbL, PsbM, PsbT, PsbY, PsbZ, Psb30/Ycf12, at least 3 peripheral proteins of the oxygen-evolving complex and a large number of cofactors. It forms dimeric complexes.

Its subcellular location is the plastid. It localises to the chloroplast thylakoid membrane. Its function is as follows. Found at the monomer-monomer interface of the photosystem II (PS II) dimer, plays a role in assembly and dimerization of PSII. PSII is a light-driven water plastoquinone oxidoreductase, using light energy to abstract electrons from H(2)O, generating a proton gradient subsequently used for ATP formation. This chain is Photosystem II reaction center protein T, found in Suaeda aralocaspica (Seablite).